A 363-amino-acid polypeptide reads, in one-letter code: S-adenosylmethionine:tRNA ribosyltransferase-isomerase (363 aa).

It belongs to the QueA family. In terms of assembly, monomer.

It is found in the cytoplasm. The catalysed reaction is 7-aminomethyl-7-carbaguanosine(34) in tRNA + S-adenosyl-L-methionine = epoxyqueuosine(34) in tRNA + adenine + L-methionine + 2 H(+). The protein operates within tRNA modification; tRNA-queuosine biosynthesis. Transfers and isomerizes the ribose moiety from AdoMet to the 7-aminomethyl group of 7-deazaguanine (preQ1-tRNA) to give epoxyqueuosine (oQ-tRNA). This is S-adenosylmethionine:tRNA ribosyltransferase-isomerase from Magnetococcus marinus (strain ATCC BAA-1437 / JCM 17883 / MC-1).